Here is a 399-residue protein sequence, read N- to C-terminus: MSTKDFIEKDYYKVLGVPKDATEAEIKKAYRKLARENHPDANKGNVKAEERFKEISEANDILGDPKKRKEYDEARALFGNGGFRPGPGAGGGGTFNFDLGDLFGGGAQGGGGQGGAGGFGGGLGDVFGGLFNRTGGGPGTGTRTQPRRGQDIESEVTLSFTEAIEGATVPLRMSSQAPCKACSGTGDKNGTPRVCPTCVGTGQVARGSGGGFSLTDPCPDCKGRGLIAEDPCEVCKGSGRAKSSRTMQVRIPAGVSDGQRIRLRGKGTPGERGGPAGDLYVVVHVKEHPVFGRRGDNLTVTVPVTYAEAALGGEVRVPTLGGPSVTLKLPAGTPNGRTMRARGKGAVRKDGTRGDLLVTVEVSVPKDLTGKARDALQAYREATADEDPRAELFQAAKGA.

Positions 10–75 (DYYKVLGVPK…KKRKEYDEAR (66 aa)) constitute a J domain. A CR-type zinc finger spans residues 166–244 (GATVPLRMSS…CKGSGRAKSS (79 aa)). Residues C179, C182, C195, C198, C218, C221, C232, and C235 each coordinate Zn(2+). CXXCXGXG motif repeat units follow at residues 179–186 (CKACSGTG), 195–202 (CPTCVGTG), 218–225 (CPDCKGRG), and 232–239 (CEVCKGSG).

It belongs to the DnaJ family. In terms of assembly, homodimer. Zn(2+) is required as a cofactor.

It is found in the cytoplasm. Its function is as follows. Participates actively in the response to hyperosmotic and heat shock by preventing the aggregation of stress-denatured proteins and by disaggregating proteins, also in an autonomous, DnaK-independent fashion. Unfolded proteins bind initially to DnaJ; upon interaction with the DnaJ-bound protein, DnaK hydrolyzes its bound ATP, resulting in the formation of a stable complex. GrpE releases ADP from DnaK; ATP binding to DnaK triggers the release of the substrate protein, thus completing the reaction cycle. Several rounds of ATP-dependent interactions between DnaJ, DnaK and GrpE are required for fully efficient folding. Also involved, together with DnaK and GrpE, in the DNA replication of plasmids through activation of initiation proteins. The sequence is that of Chaperone protein DnaJ 1 from Streptomyces coelicolor (strain ATCC BAA-471 / A3(2) / M145).